The chain runs to 231 residues: SrfA-induced gene F protein (231 aa).

This Dictyostelium discoideum (Social amoeba) protein is SrfA-induced gene F protein (sigF).